A 359-amino-acid polypeptide reads, in one-letter code: Transaldolase (359 aa).

The active-site Schiff-base intermediate with substrate is Lys139.

This sequence belongs to the transaldolase family. Type 2 subfamily.

The protein resides in the cytoplasm. It catalyses the reaction D-sedoheptulose 7-phosphate + D-glyceraldehyde 3-phosphate = D-erythrose 4-phosphate + beta-D-fructose 6-phosphate. It functions in the pathway carbohydrate degradation; pentose phosphate pathway; D-glyceraldehyde 3-phosphate and beta-D-fructose 6-phosphate from D-ribose 5-phosphate and D-xylulose 5-phosphate (non-oxidative stage): step 2/3. Transaldolase is important for the balance of metabolites in the pentose-phosphate pathway. This Thiobacillus denitrificans (strain ATCC 25259 / T1) protein is Transaldolase.